Reading from the N-terminus, the 547-residue chain is Apicoplast pyruvate carrier 1 (547 aa).

Positions 1 to 33 (MEPRAPPRLSVSSPRRESGATVPSHSPSTLLSC) are disordered. Residues 1–45 (MEPRAPPRLSVSSPRRESGATVPSHSPSTLLSCASSETATEKRRR) lie on the Cytoplasmic side of the membrane. Polar residues predominate over residues 21–33 (TVPSHSPSTLLSC). The next 12 helical transmembrane spans lie at 46–66 (WTGV…GTVY), 126–146 (AWVL…GGIA), 167–187 (VGMA…FGVI), 189–209 (GVGL…WFPE), 212–232 (GIVS…FSPL), 278–298 (LLAV…RVPA), 345–365 (ALVS…GLAI), 385–405 (ILTE…NAVG), 417–437 (GFQT…FFLP), 445–465 (LCYA…FSVF), 467–487 (SAVA…FIFG), and 515–535 (LMGL…ALSP).

It belongs to the major facilitator superfamily. In terms of assembly, interacts with apicoplast pyruvate carrier 2.

The protein resides in the plastid. It is found in the apicoplast. Its subcellular location is the membrane. Its function is as follows. Along with apicoplast pyruvate carrier 2, forms apicoplast pyruvate carrier (APC) complex, which transports pyruvate into the apicoplast and may also transport amino acids like methionine, serine, glycine and tryptophan with low efficiency. Required for maintaining pyruvate-dependent metabolic activities in the apicoplast, such as synthesis of fatty acids, isopentenyl pyrophosphate (IPP), dimethylallyl pyrophosphate (DMAPP) and methylerythritol 4-phosphate (MEP). Required for maintaining the integrity of the apicoplast. Required for normal parasite growth. The chain is Apicoplast pyruvate carrier 1 from Toxoplasma gondii.